We begin with the raw amino-acid sequence, 76 residues long: Adropin (76 aa).

Positions 1–33 (MGAAISQGALIAIVCNGLVGFLLLLLWVILCWA) are cleaved as a signal peptide. Residues 41–76 (VDSLSESSPNSSPGPCPEKAPPPQKPSHEGSYLLQP) are disordered. The segment covering 52-65 (SPGPCPEKAPPPQK) has biased composition (pro residues).

In terms of tissue distribution, expressed in liver and brain.

The protein resides in the secreted. Involved in the regulation of glucose homeostasis and lipid metabolism. This is Adropin (ENHO) from Homo sapiens (Human).